The primary structure comprises 505 residues: Midnolin (505 aa).

The Ubiquitin-like domain maps to Met-32 to Gly-106. Disordered stretches follow at residues Pro-155 to Phe-176, Ser-228 to Pro-305, and Arg-440 to Phe-485. A compositionally biased stretch (low complexity) spans Arg-238–Val-262. Positions Thr-263–Cys-282 are enriched in polar residues. Positions Ser-283–Pro-300 are enriched in low complexity.

In terms of assembly, interacts with GCK; the interaction occurs preferentially at low glucose levels. Interacts with the proteasome.

The protein localises to the nucleus. The protein resides in the cytoplasm. It is found in the cytosol. Its subcellular location is the nucleolus. Facilitates the ubiquitin-independent proteasomal degradation of stimulus-induced transcription factors such as FOSB, EGR1, NR4A1, and IRF4 to the proteasome for degradation. Promotes also the degradation of other substrates such as CBX4. Plays a role in inhibiting the activity of glucokinase GCK and both glucose-induced and basal insulin secretion. This chain is Midnolin, found in Rattus norvegicus (Rat).